The primary structure comprises 425 residues: Tyrosine--tRNA ligase (425 aa).

Tyr-37 is a binding site for L-tyrosine. A 'HIGH' region motif is present at residues 42-51 (PTADSLHLGH). 2 residues coordinate L-tyrosine: Tyr-175 and Gln-179. The short motif at 235–239 (KFGKT) is the 'KMSKS' region element. An ATP-binding site is contributed by Lys-238. An S4 RNA-binding domain is found at 357–414 (ADLQQALVSAELVPSRGQARTMISSNAVTINGEKQANPEYIFSASDRLFDRYTLLRRG).

Belongs to the class-I aminoacyl-tRNA synthetase family. TyrS type 1 subfamily. In terms of assembly, homodimer.

It localises to the cytoplasm. It catalyses the reaction tRNA(Tyr) + L-tyrosine + ATP = L-tyrosyl-tRNA(Tyr) + AMP + diphosphate + H(+). Catalyzes the attachment of tyrosine to tRNA(Tyr) in a two-step reaction: tyrosine is first activated by ATP to form Tyr-AMP and then transferred to the acceptor end of tRNA(Tyr). This is Tyrosine--tRNA ligase from Pectobacterium atrosepticum (strain SCRI 1043 / ATCC BAA-672) (Erwinia carotovora subsp. atroseptica).